Consider the following 265-residue polypeptide: MKLKQNIEKEIIKINNIRIHQYTVLYTSNCTIDVYTKEGSNTYLRNELIFLERGINISVRLQKKKSTVNPFIAIRLSSDTLRRLKDALMIIYGISKVDACSCPNWSKGIIVADADDSVLDTFKSIDHNDDSRITSDLIYLISKIENNRKIIESIYISAVSFFSDKVRNTIEKDLSKRWTLAIIADEFNVSEITIRKRLESEYITFNQILMQSRMSKAALLLLDNSYQISQISNMIGFSSTSYFIRLFVKHFGITPKQFLTYFKSQ.

Positions 164–261 (DKVRNTIEKD…GITPKQFLTY (98 aa)) constitute an HTH araC/xylS-type domain. 2 consecutive DNA-binding regions (H-T-H motif) follow at residues 181-202 (AIIADEFNVSEITIRKRLESEY) and 228-251 (ISQISNMIGFSSTSYFIRLFVKHF).

As to quaternary structure, homodimer.

Transcriptional activator of aggregative adherence fimbria I expression in enteroaggregative E.coli. This chain is Transcriptional activator AggR (aggR), found in Escherichia coli.